We begin with the raw amino-acid sequence, 468 residues long: UDP-N-acetylmuramoyl-L-alanine--L-glutamate ligase (468 aa).

122–128 (GTKGKST) contacts ATP.

Belongs to the MurCDEF family. MurD2 subfamily.

It is found in the cytoplasm. It carries out the reaction UDP-N-acetyl-alpha-D-muramoyl-L-alanine + L-glutamate + ATP = UDP-N-acetyl-alpha-D-muramoyl-L-alanyl-L-glutamate + ADP + phosphate + H(+). It functions in the pathway cell wall biogenesis; peptidoglycan biosynthesis. In terms of biological role, cell wall formation. Catalyzes the addition of L-glutamate to the nucleotide precursor UDP-N-acetylmuramoyl-L-alanine. The protein is UDP-N-acetylmuramoyl-L-alanine--L-glutamate ligase of Xylella fastidiosa (strain Temecula1 / ATCC 700964).